The following is a 607-amino-acid chain: UvrABC system protein C (607 aa).

In terms of domain architecture, GIY-YIG spans Gly16–Ile94. The region spanning Gln203 to Val238 is the UVR domain.

Belongs to the UvrC family. In terms of assembly, interacts with UvrB in an incision complex.

Its subcellular location is the cytoplasm. In terms of biological role, the UvrABC repair system catalyzes the recognition and processing of DNA lesions. UvrC both incises the 5' and 3' sides of the lesion. The N-terminal half is responsible for the 3' incision and the C-terminal half is responsible for the 5' incision. The polypeptide is UvrABC system protein C (Pseudomonas entomophila (strain L48)).